The following is a 219-amino-acid chain: Trafficking protein particle complex subunit 4 (219 aa).

This sequence belongs to the TRAPP small subunits family. TRAPPC4 subfamily. In terms of assembly, component of the multisubunit TRAPP (transport protein particle) complex, which includes at least TRAPPC2, TRAPPC2L, TRAPPC3, TRAPPC3L, TRAPPC4, TRAPPC5, TRAPPC8, TRAPPC9, TRAPPC10, TRAPPC11 and TRAPPC12. Interacts with SDC2.

It localises to the postsynaptic cell membrane. The protein resides in the golgi apparatus membrane. Its subcellular location is the endoplasmic reticulum. The protein localises to the vesicle. Core component of the TRAPP complexes which has a function of guanine nucleotide exchange factor activity for Rab1 GTPase. Plays a role in vesicular transport from endoplasmic reticulum to Golgi and autophagy. May play a role in dendrite postsynaptic membrane trafficking. The sequence is that of Trafficking protein particle complex subunit 4 from Homo sapiens (Human).